A 219-amino-acid polypeptide reads, in one-letter code: Hemolysin-3 (219 aa).

7 helical membrane-spanning segments follow: residues 19–39 (AITH…LIIH), 49–69 (VVAF…STLL), 83–103 (ILDH…FLLI), 112–132 (TLLA…IFFV), 138–158 (ASTL…KPLY), 165–185 (GFSL…FFLW), and 194–214 (IWHL…LFYV).

Belongs to the UPF0073 (Hly-III) family.

It is found in the cell membrane. Might be virulent against a mammalian host; when expressed in E.coli, the soluble extract has hemolytic activity on human erythrocytes. The activity is not inhibited by cholesterol or activated by 2-mercaptoethanol. Might be pore-forming protein. Its in vivo role in virulence is untested, nor has it been shown to be secreted by B.cereus. This is Hemolysin-3 from Bacillus cereus.